An 860-amino-acid polypeptide reads, in one-letter code: DNA mismatch repair protein MutS (860 aa).

Glycine 606 to serine 613 provides a ligand contact to ATP.

It belongs to the DNA mismatch repair MutS family.

This protein is involved in the repair of mismatches in DNA. It is possible that it carries out the mismatch recognition step. This protein has a weak ATPase activity. This chain is DNA mismatch repair protein MutS, found in Geobacillus sp. (strain WCH70).